Consider the following 656-residue polypeptide: DNA mismatch repair protein MutL (656 aa).

The interval 385 to 427 is disordered; sequence DNSDSLTEQNSTDYTVNQPETGSVSEKITDRTVESSNEFTDRT. The segment covering 387 to 410 has biased composition (polar residues); the sequence is SDSLTEQNSTDYTVNQPETGSVSE. Over residues 411–427 the composition is skewed to basic and acidic residues; it reads KITDRTVESSNEFTDRT.

This sequence belongs to the DNA mismatch repair MutL/HexB family.

This protein is involved in the repair of mismatches in DNA. It is required for dam-dependent methyl-directed DNA mismatch repair. May act as a 'molecular matchmaker', a protein that promotes the formation of a stable complex between two or more DNA-binding proteins in an ATP-dependent manner without itself being part of a final effector complex. In Lactococcus lactis subsp. cremoris (strain SK11), this protein is DNA mismatch repair protein MutL.